The chain runs to 720 residues: Protein unc-112 (720 aa).

Disordered regions lie at residues 145–170 (DLRR…ESVG) and 210–236 (MGTL…TMRR). Residues 288–614 (WLDSSRSLME…ALPEHGIHYF (327 aa)) enclose the FERM domain. Positions 402 to 507 (VPELADYLKY…WMAACRLASR (106 aa)) constitute a PH domain.

This sequence belongs to the kindlin family. In terms of assembly, interacts with pat-4/ILK. Probably forms a complex with pat-4 and pat-6. Component of an integrin containing attachment complex, composed of at least pat-2, pat-3, pat-4, pat-6, unc-52, unc-97 and unc-112. In terms of tissue distribution, mainly expressed in muscle cells in both embryos and adults.

It is found in the cell membrane. It localises to the cytoplasm. The protein localises to the myofibril. The protein resides in the sarcomere. Its subcellular location is the m line. In terms of biological role, component of an integrin containing attachment complex, which is required for muscle development and maintenance. Probable regulator of cell-extracellular matrix adhesion. Required during initial muscle assembly to form dense bodies and M-lines. In Caenorhabditis elegans, this protein is Protein unc-112.